A 601-amino-acid polypeptide reads, in one-letter code: Elongation factor 4 (601 aa).

In terms of domain architecture, tr-type G spans 6–188 (AHIRNFSIIA…QIVRKVPPPK (183 aa)). Residues 18-23 (DHGKST) and 135-138 (NKVD) each bind GTP.

The protein belongs to the TRAFAC class translation factor GTPase superfamily. Classic translation factor GTPase family. LepA subfamily.

The protein localises to the cell inner membrane. The catalysed reaction is GTP + H2O = GDP + phosphate + H(+). Its function is as follows. Required for accurate and efficient protein synthesis under certain stress conditions. May act as a fidelity factor of the translation reaction, by catalyzing a one-codon backward translocation of tRNAs on improperly translocated ribosomes. Back-translocation proceeds from a post-translocation (POST) complex to a pre-translocation (PRE) complex, thus giving elongation factor G a second chance to translocate the tRNAs correctly. Binds to ribosomes in a GTP-dependent manner. This is Elongation factor 4 from Anaeromyxobacter sp. (strain Fw109-5).